Consider the following 122-residue polypeptide: Large ribosomal subunit protein uL14c (122 aa).

This sequence belongs to the universal ribosomal protein uL14 family. As to quaternary structure, part of the 50S ribosomal subunit.

It is found in the plastid. It localises to the chloroplast. Its function is as follows. Binds to 23S rRNA. This Angiopteris evecta (Mule's foot fern) protein is Large ribosomal subunit protein uL14c.